The chain runs to 219 residues: Mucosal pentraxin (219 aa).

An N-terminal signal peptide occupies residues 1–19 (MEKLIVGILFLSVLSGSVA). The region spanning 24-219 (KGKAFIFPQE…YVVIKPKLWP (196 aa)) is the Pentraxin (PTX) domain. N-linked (GlcNAc...) asparagine glycosylation occurs at Asn-51. An intrachain disulfide couples Cys-55 to Cys-114. The Ca(2+) site is built by Asp-77, Asn-78, Glu-155, Gln-156, Asp-157, and Gln-167.

This sequence belongs to the pentraxin family. In terms of assembly, homopentamer. Pentraxin (or pentaxin) have a discoid arrangement of 5 non-covalently bound subunits. Requires Ca(2+) as cofactor. In terms of tissue distribution, expressed in colon.

The protein resides in the secreted. This chain is Mucosal pentraxin (Mptx1), found in Mus musculus (Mouse).